Consider the following 199-residue polypeptide: Molybdenum cofactor guanylyltransferase (199 aa).

GTP contacts are provided by residues 12-14 (LAG), Lys25, Asn53, Asp71, and Asp101. Asp101 serves as a coordination point for Mg(2+).

This sequence belongs to the MobA family. As to quaternary structure, monomer. The cofactor is Mg(2+).

Its subcellular location is the cytoplasm. The catalysed reaction is Mo-molybdopterin + GTP + H(+) = Mo-molybdopterin guanine dinucleotide + diphosphate. Functionally, transfers a GMP moiety from GTP to Mo-molybdopterin (Mo-MPT) cofactor (Moco or molybdenum cofactor) to form Mo-molybdopterin guanine dinucleotide (Mo-MGD) cofactor. This chain is Molybdenum cofactor guanylyltransferase, found in Cupriavidus pinatubonensis (strain JMP 134 / LMG 1197) (Cupriavidus necator (strain JMP 134)).